The primary structure comprises 134 residues: D-ribose pyranase (134 aa).

The active-site Proton donor is His-20. Residues Asp-28, His-101, and 123–125 each bind substrate; that span reads YSN.

This sequence belongs to the RbsD / FucU family. RbsD subfamily. Homodecamer.

Its subcellular location is the cytoplasm. The enzyme catalyses beta-D-ribopyranose = beta-D-ribofuranose. It functions in the pathway carbohydrate metabolism; D-ribose degradation; D-ribose 5-phosphate from beta-D-ribopyranose: step 1/2. Catalyzes the interconversion of beta-pyran and beta-furan forms of D-ribose. The polypeptide is D-ribose pyranase (Pseudomonas syringae pv. tomato (strain ATCC BAA-871 / DC3000)).